A 258-amino-acid polypeptide reads, in one-letter code: Pimeloyl-[acyl-carrier protein] methyl ester esterase (258 aa).

The AB hydrolase-1 domain maps to 16 to 241; that stretch reads LVLLHGWGLN…GSAHAPFVSH (226 aa). Substrate contacts are provided by residues W22, 82–83, and 143–147; these read SM and FLALQ. S82 functions as the Nucleophile in the catalytic mechanism. Residues D207 and H235 contribute to the active site. H235 lines the substrate pocket.

This sequence belongs to the AB hydrolase superfamily. Carboxylesterase BioH family. Monomer.

It localises to the cytoplasm. It carries out the reaction 6-carboxyhexanoyl-[ACP] methyl ester + H2O = 6-carboxyhexanoyl-[ACP] + methanol + H(+). It participates in cofactor biosynthesis; biotin biosynthesis. The physiological role of BioH is to remove the methyl group introduced by BioC when the pimeloyl moiety is complete. It allows to synthesize pimeloyl-ACP via the fatty acid synthetic pathway through the hydrolysis of the ester bonds of pimeloyl-ACP esters. This is Pimeloyl-[acyl-carrier protein] methyl ester esterase from Yersinia enterocolitica serotype O:8 / biotype 1B (strain NCTC 13174 / 8081).